A 269-amino-acid chain; its full sequence is MTVPAFTVVIPARLASTRLPDKPLADIGGRPMVVRVAERAHASSAQRTVVATDAPAVAQACAAHGIEAVLTRADHPSGTDRLAEVAAQLGLADDAIVVNVQGDEPLIEPALIDEVALHLAHHADCAIATAAHPLHDSAEVFNPNVVKVVCDAAGRALYFSRAPIPWARDAWSGVPAMPAASARVPLPDMPVLRHIGLYAYRAGFLRRFPTLAAAPLEQTEALEQLRAMWHGERIAVMQTAAAPAPGVDTQADLDRVRTLWAQSMAQEGP.

It belongs to the KdsB family.

The protein localises to the cytoplasm. The enzyme catalyses 3-deoxy-alpha-D-manno-oct-2-ulosonate + CTP = CMP-3-deoxy-beta-D-manno-octulosonate + diphosphate. The protein operates within nucleotide-sugar biosynthesis; CMP-3-deoxy-D-manno-octulosonate biosynthesis; CMP-3-deoxy-D-manno-octulosonate from 3-deoxy-D-manno-octulosonate and CTP: step 1/1. Its pathway is bacterial outer membrane biogenesis; lipopolysaccharide biosynthesis. Its function is as follows. Activates KDO (a required 8-carbon sugar) for incorporation into bacterial lipopolysaccharide in Gram-negative bacteria. The protein is 3-deoxy-manno-octulosonate cytidylyltransferase of Cupriavidus taiwanensis (strain DSM 17343 / BCRC 17206 / CCUG 44338 / CIP 107171 / LMG 19424 / R1) (Ralstonia taiwanensis (strain LMG 19424)).